The primary structure comprises 215 residues: MRVILLGAPGAGKGTQAKFITEKFGIPQISTGDMLRAAVKAGTELGLKAKSVMDSGGLVSDDLIINLVKERISQADCVNGFLFDGFPRTIPQAEALVKAGVELDNVVEIAVDDEEIVQRIAGRRVHEASGRVYHTVYNPPKIAGKDDITGEDLVQRKDDTEETVRHRLSVYHSQTKPLVEFYQQLAATQGKPKYSHIPGVGSVEVITGKVLEALS.

ATP is bound at residue 10–15 (GAGKGT). The interval 30–59 (STGDMLRAAVKAGTELGLKAKSVMDSGGLV) is NMP. AMP is bound by residues threonine 31, arginine 36, 57–59 (GLV), 85–88 (GFPR), and glutamine 92. The tract at residues 122–159 (GRRVHEASGRVYHTVYNPPKIAGKDDITGEDLVQRKDD) is LID. ATP-binding positions include arginine 123 and 132 to 133 (VY). Positions 156 and 167 each coordinate AMP. Glycine 201 is an ATP binding site.

Belongs to the adenylate kinase family. Monomer.

The protein resides in the cytoplasm. It catalyses the reaction AMP + ATP = 2 ADP. Its pathway is purine metabolism; AMP biosynthesis via salvage pathway; AMP from ADP: step 1/1. In terms of biological role, catalyzes the reversible transfer of the terminal phosphate group between ATP and AMP. Plays an important role in cellular energy homeostasis and in adenine nucleotide metabolism. This chain is Adenylate kinase, found in Pseudomonas fluorescens (strain ATCC BAA-477 / NRRL B-23932 / Pf-5).